The primary structure comprises 391 residues: Cytochrome b (391 aa).

4 helical membrane passes run 33–53 (FGSL…FLAM), 77–98 (WLIR…YLHI), 113–133 (WSAG…GYVL), and 178–198 (FFAF…VHLL). 2 residues coordinate heme b: H83 and H97. Residues H182 and H196 each coordinate heme b. A ubiquinone is bound at residue H201. Transmembrane regions (helical) follow at residues 226–246 (YKDL…VLFI), 288–308 (LGGV…PILH), 320–340 (LAQI…WIGG), and 347–367 (FIII…VFFP).

The protein belongs to the cytochrome b family. In terms of assembly, the cytochrome bc1 complex contains 3 respiratory subunits (MT-CYB, CYC1 and UQCRFS1), 2 core proteins (UQCRC1 and UQCRC2) and probably 6 low-molecular weight proteins. Heme b serves as cofactor.

Its subcellular location is the mitochondrion inner membrane. Its function is as follows. Component of the ubiquinol-cytochrome c reductase complex (complex III or cytochrome b-c1 complex) that is part of the mitochondrial respiratory chain. The b-c1 complex mediates electron transfer from ubiquinol to cytochrome c. Contributes to the generation of a proton gradient across the mitochondrial membrane that is then used for ATP synthesis. In Kryptolebias marmoratus (Mangrove killifish), this protein is Cytochrome b (mt-cyb).